Reading from the N-terminus, the 436-residue chain is Trigger factor (436 aa).

The PPIase FKBP-type domain occupies 163-248 (GDRVTVDFEG…VKKIEAAHLP (86 aa)).

This sequence belongs to the FKBP-type PPIase family. Tig subfamily.

The protein localises to the cytoplasm. It carries out the reaction [protein]-peptidylproline (omega=180) = [protein]-peptidylproline (omega=0). Functionally, involved in protein export. Acts as a chaperone by maintaining the newly synthesized protein in an open conformation. Functions as a peptidyl-prolyl cis-trans isomerase. The protein is Trigger factor of Acidovorax ebreus (strain TPSY) (Diaphorobacter sp. (strain TPSY)).